The chain runs to 322 residues: Peroxisomal adenine nucleotide carrier 1 (322 aa).

Solcar repeat units follow at residues 5–94, 104–184, and 202–298; these read LESV…FKRV, IGTK…LKQH, and LSAF…ITAT. 6 helical membrane passes run 8 to 28, 104 to 124, 158 to 178, 201 to 221, 254 to 274, and 286 to 306; these read VSEA…LYPL, IGTK…SVLI, FDGL…YTVF, VLSA…ATVL, IPGV…FKGL, and ALLL…ILAI.

This sequence belongs to the mitochondrial carrier (TC 2.A.29) family. In terms of tissue distribution, expressed in stamens, pollen grains, seeds, leaves, cotyledons, roots, stems, flowers, hypocotyls and siliques.

The protein localises to the peroxisome membrane. Functionally, peroxisomal adenine nucleotide transporter catalyzing the counterexchange of ATP with AMP. ATP is needed by reactions that generate acyl-CoA for peroxisomal fatty acid beta-oxidation during postgerminative growth. Required for the beta-oxidation reactions involved in auxin biosynthesis and for the conversion of seed-reserved triacylglycerols into sucrose that is necessary for growth before the onset of photosynthesis. In Arabidopsis thaliana (Mouse-ear cress), this protein is Peroxisomal adenine nucleotide carrier 1 (PNC1).